A 392-amino-acid polypeptide reads, in one-letter code: ATP phosphoribosyltransferase regulatory subunit (392 aa).

It belongs to the class-II aminoacyl-tRNA synthetase family. HisZ subfamily. As to quaternary structure, heteromultimer composed of HisG and HisZ subunits.

The protein resides in the cytoplasm. The protein operates within amino-acid biosynthesis; L-histidine biosynthesis; L-histidine from 5-phospho-alpha-D-ribose 1-diphosphate: step 1/9. Its function is as follows. Required for the first step of histidine biosynthesis. May allow the feedback regulation of ATP phosphoribosyltransferase activity by histidine. This chain is ATP phosphoribosyltransferase regulatory subunit, found in Prochlorococcus marinus (strain MIT 9211).